A 250-amino-acid chain; its full sequence is Pre-protein VI (250 aa).

The propeptide occupies 1 to 33 (MEDINFASLAPRHGSRPFMGNWQDIGTSNMSGG). The segment at 34 to 54 (AFSWGSLWSGIKNFGSTVKNY) is amphipathic alpha-helix essential for membrane lytic activity. Residues 36–53 (SWGSLWSGIKNFGSTVKN) form an involved in endosomal membrane lysis region. Residues 48 to 74 (GSTVKNYGSKAWNSSTGQMLRDKLKEQ) form an interaction with hexon protein region. The short motif at 67-76 (LRDKLKEQNF) is the Nuclear export signal element. Positions 103-148 (INSKLDPRPPVEEPPPAVETVSPEGRGEKRPRPDREETLVTQIDEP) are disordered. Ser124 carries the phosphoserine; by host modification. A compositionally biased stretch (basic and acidic residues) spans 127–140 (GRGEKRPRPDREET). The short motif at 131–135 (KRPRP) is the Nuclear localization signal element. A Phosphothreonine; by host modification is found at Thr143. The short motif at 148–151 (PPSY) is the PPXY motif element. A Nuclear export signal motif is present at residues 231-242 (STLNSIVGLGVQ). The interaction with hexon protein stretch occupies residues 233 to 239 (LNSIVGL). The segment at 240 to 250 (GVQSLKRRRCF) is binds to importin alpha/beta, involved in hexon nuclear import. The short motif at 245–248 (KRRR) is the Nuclear localization signal element.

It belongs to the adenoviridae protein VI family. As to quaternary structure, interacts with hexon protein; this interaction allows nuclear import of hexon trimers and possibly pre-capsid assembly. Interacts (via C-terminal NLS) with importin alpha/beta. In terms of assembly, interacts (via PPxY motif) with host NEDD4 ubiquitine ligase; this interaction might play a role in virus intracellular transport during entry. Part of a complex composed of the core-capsid bridging protein, the endosome lysis protein VI and the hexon-linking protein VIII; these interactions bridge the virus core to the capsid. Interacts with peripentonal hexons; this interaction stabilizes the capsid by gluing two peripentonal hexons together and joining them with an adjacent group-of-nine hexon. Heterodimer with the viral protease; disulfide-linked. Interacts with the viral protease. Post-translationally, ubiquitinated by Nedd4 following partial capsid disassembly; which might play a role in intracellular virus movement during entry. In terms of processing, contains the major nuclear import and export signals. Proteolytically removed during virion maturation. The processing of the C-terminus turns the precursor into a mature viral structural protein and abrogates its ability to promote hexon import and act as a potential chaperone protein.

Its subcellular location is the host nucleus. The protein resides in the host cytoplasm. It localises to the virion. During virus assembly, promotes hexon trimers nuclear import through nuclear pore complexes via an importin alpha/beta-dependent mechanism. By analogy to herpesviruses capsid assembly, might act as a chaperone to promote the formation of the icosahedral capsid. Functionally, structural component of the virion that provides increased stability to the particle shell through its interaction with the core-capsid bridging protein and the hexon-linking protein VIII. Fibers shedding during virus entry into host cell allows the endosome lysis protein to be exposed as a membrane-lytic peptide. Exhibits pH-independent membrane fragmentation activity and probably mediates viral rapid escape from host endosome via organellar membrane lysis. It is not clear if it then remains partially associated with the capsid and involved in the intracellular microtubule-dependent transport of capsid to the nucleus, or if it is lost during endosomal penetration. Its function is as follows. Cofactor that activates the viral protease. Binds to viral protease in a 1:1 ratio. The sequence is that of Pre-protein VI from Homo sapiens (Human).